A 346-amino-acid chain; its full sequence is Quinolinate synthase (346 aa).

Residues histidine 47 and serine 68 each contribute to the iminosuccinate site. Residue cysteine 113 coordinates [4Fe-4S] cluster. Residues 139–141 and serine 156 contribute to the iminosuccinate site; that span reads YAN. Residue cysteine 200 participates in [4Fe-4S] cluster binding. Iminosuccinate-binding positions include 226–228 and threonine 243; that span reads HPE. [4Fe-4S] cluster is bound at residue cysteine 297.

This sequence belongs to the quinolinate synthase family. Type 1 subfamily. [4Fe-4S] cluster serves as cofactor.

It is found in the cytoplasm. The enzyme catalyses iminosuccinate + dihydroxyacetone phosphate = quinolinate + phosphate + 2 H2O + H(+). The protein operates within cofactor biosynthesis; NAD(+) biosynthesis; quinolinate from iminoaspartate: step 1/1. Catalyzes the condensation of iminoaspartate with dihydroxyacetone phosphate to form quinolinate. The protein is Quinolinate synthase of Photorhabdus laumondii subsp. laumondii (strain DSM 15139 / CIP 105565 / TT01) (Photorhabdus luminescens subsp. laumondii).